The chain runs to 144 residues: Large ribosomal subunit protein uL13 (144 aa).

It belongs to the universal ribosomal protein uL13 family. In terms of assembly, part of the 50S ribosomal subunit.

This protein is one of the early assembly proteins of the 50S ribosomal subunit, although it is not seen to bind rRNA by itself. It is important during the early stages of 50S assembly. This Mycoplasmopsis agalactiae (strain NCTC 10123 / CIP 59.7 / PG2) (Mycoplasma agalactiae) protein is Large ribosomal subunit protein uL13.